A 951-amino-acid chain; its full sequence is Serine/threonine-protein phosphatase 4 regulatory subunit 1 (951 aa).

8 HEAT repeats span residues 26-63, 65-81, 82-119, 127-164, 168-206, 208-246, 248-285, and 287-324; these read ESDV…VFNR, MVAR…CDDE, RDCI…FCQE, AFSK…QELI, DVET…MVGK, ITER…VVGQ, ATEE…ATCQ, and IRRT…TFAN. Disordered stretches follow at residues 325 to 377, 411 to 451, and 474 to 499; these read PSSS…HSSA, SESP…PLDQ, and QQDP…GPPN. The segment covering 332–365 has biased composition (basic and acidic residues); it reads FKDESKSSEDSSAEDKDRMRDNDVVEEEHRRPED. Composition is skewed to polar residues over residues 411–421 and 430–445; these read SESPQEAASND and NSKS…SSPE. The segment covering 474 to 487 has biased composition (basic and acidic residues); the sequence is QQDPEERLSPERTG. The HEAT 9 repeat unit spans residues 506 to 543; sequence KELEEMIENLEPHMDDPDVKAQVDVLSAALRASSLDAH. The tract at residues 590 to 612 is disordered; it reads DYVHGGADVSPGDGFSPDEDRRP. HEAT repeat units lie at residues 699–735, 800–838, and 862–899; these read LTAA…LLHI, WISY…RCPK, and QFAV…EKEY. Ser-936 bears the Phosphoserine mark.

As to quaternary structure, serine/threonine-protein phosphatase 4 (PP4) occurs in different assemblies of the catalytic and one or more regulatory subunits. Component of the PP4 complex PPP4C-PPP4R1. Interacts with HDAC3.

Regulatory subunit of serine/threonine-protein phosphatase 4. May play a role in regulation of cell division in renal glomeruli. The PPP4C-PPP4R1 PP4 complex may play a role in dephosphorylation and regulation of HDAC3. Plays a role in the inhibition of TNF-induced NF-kappa-B activation by regulating the dephosphorylation of TRAF2. This Mus musculus (Mouse) protein is Serine/threonine-protein phosphatase 4 regulatory subunit 1 (Ppp4r1).